Consider the following 264-residue polypeptide: Proteasome assembly chaperone 2 (264 aa).

Phosphothreonine is present on threonine 137.

Belongs to the PSMG2 family. Forms a heterodimer with PSMG1. The PSMG1-PSMG2 heterodimer interacts directly with the PSMA5 and PSMA7 proteasome alpha subunits. Degraded by the proteasome upon completion of 20S proteasome maturation. Widely expressed with highest levels in lung, brain and colon. Moderately expressed in muscle, stomach, spleen and heart. Weakly expressed in small intestine, pancreas and liver. Highly expressed in hepatocellular carcinomas with low levels in surrounding liver tissue.

It localises to the nucleus. Its function is as follows. Chaperone protein which promotes assembly of the 20S proteasome as part of a heterodimer with PSMG1. The PSMG1-PSMG2 heterodimer binds to the PSMA5 and PSMA7 proteasome subunits, promotes assembly of the proteasome alpha subunits into the heteroheptameric alpha ring and prevents alpha ring dimerization. The chain is Proteasome assembly chaperone 2 from Homo sapiens (Human).